The sequence spans 115 residues: T cell receptor delta variable 2 (115 aa).

A signal peptide spans 1 to 19; it reads MQRISSLIHLSLFWAGVMS. Residues 25–115 form the Ig-like domain; it reads PEHQTVPVSI…EGSYYCACDT (91 aa). The cysteines at positions 42 and 111 are disulfide-linked.

As to quaternary structure, gamma-delta TR is a heterodimer composed of a gamma and delta chain; disulfide-linked. The gamma-delta TR is associated with the transmembrane signaling CD3 coreceptor proteins following the stoichiometry: a single gamma-delta TR heterodimer associates with one CD3D-CD3E heterodimer, one CD3G-CD3E heterodimer and one CD247 homodimer forming a stable octameric structure. Upon activation, gamma-delta TR complex associates with FCER1G to initiate intracellular signaling.

It is found in the cell membrane. Its function is as follows. V region of the variable domain of T cell receptor (TR) delta chain that participates in the antigen recognition. Gamma-delta TRs recognize a variety of self and foreign non-peptide antigens frequently expressed at the epithelial boundaries between the host and external environment, including endogenous lipids presented by MH-like protein CD1D and phosphoantigens presented by butyrophilin-like molecule BTN3A1. Upon antigen recognition induces rapid, innate-like immune responses involved in pathogen clearance and tissue repair. Binding of gamma-delta TR complex to antigen triggers phosphorylation of immunoreceptor tyrosine-based activation motifs (ITAMs) in the CD3 chains by the LCK and FYN kinases, allowing the recruitment, phosphorylation, and activation of ZAP70 that facilitates phosphorylation of the scaffolding proteins LCP2 and LAT. This lead to the formation of a supramolecular signalosome that recruits the phospholipase PLCG1, resulting in calcium mobilization and ERK activation, ultimately leading to T cell expansion and differentiation into effector cells. Gamma-delta TRs are produced through somatic rearrangement of a limited repertoire of variable (V), diversity (D), and joining (J) genes. The potential diversity of gamma-delta TRs is conferred by the unique ability to rearrange (D) genes in tandem and to utilize all three reading frames. The combinatorial diversity is considerably increased by the sequence exonuclease trimming and random nucleotide (N) region additions which occur during the V-(D)-J rearrangements. The protein is T cell receptor delta variable 2 of Homo sapiens (Human).